Here is a 144-residue protein sequence, read N- to C-terminus: Small ribosomal subunit protein uS9 (144 aa).

Thr-2 is subject to N-acetylthreonine. Residues 124-144 are disordered; sequence RRESKKFGGPGARARYQKSYR.

Belongs to the universal ribosomal protein uS9 family.

The polypeptide is Small ribosomal subunit protein uS9 (rps-16) (Caenorhabditis elegans).